The chain runs to 317 residues: MKRLSLVTTNRLSPHGNFLPLCTFPLAVDMAALFQEASSCPVCSDYLEKPMSLECGCAVCFKCINSLQKEPHGEDLLCCCCSMVSQKNKIRPSWQLERLASHIKELEPKLKKILQMNPRMRKFQVDMTLDADTANNFLLISDDLRSVRSGCITQNRQDLAERFDVSICILGSPRFTCGRHYWEVDVGTSTEWDLGVCRESVHRKGRIHLTTERGFWTVSLRDGSRLSASTVPLTFLFVDRKLQRVGIFLDMGMQNVSFFDAEGGSHVYTFRSVSAEEPLHLFFAPPSPPNGDKSVLSICPVINPGTTDAPVHPGEAK.

The segment at 40–82 (CPVCSDYLEKPMSLECGCAVCFKCINSLQKEPHGEDLLCCCCS) adopts an RING-type zinc-finger fold. In terms of domain architecture, B30.2/SPRY spans 107 to 301 (EPKLKKILQM…DKSVLSICPV (195 aa)).

Post-translationally, phosphorylated by PKC and CDK1. The antiproliferative effect seems to be positively regulated by PKC phosphorylation and negatively by CDK1 phosphorylation. In terms of tissue distribution, seems to be expressed in prostate and less abundantly in adult brain, fetal liver, and fetal kidney.

Its subcellular location is the cytoplasm. The protein localises to the nucleus. Its function is as follows. Negatively regulates the G2-M phase transition, possibly by promoting cyclin B1/CCNB1 and CDK1 proteasomal degradation and thereby preventing their accumulation during interphase. This Homo sapiens (Human) protein is Ret finger protein-like 1 (RFPL1).